The following is a 951-amino-acid chain: Cadmium/zinc-transporting ATPase HMA2 (951 aa).

Residues 1-83 (MASKKMTKSY…VRVTGETNFK (83 aa)) lie on the Cytoplasmic side of the membrane. The region spanning 7–73 (TKSYFDVLGI…ALNQAQLEAN (67 aa)) is the HMA domain. Residues 84 to 105 (NKWPSPFAVVSGILLLLSFFKY) traverse the membrane as a helical segment. Residues 106–108 (LYS) are Extracellular-facing. A helical membrane pass occupies residues 109-128 (PFRWLAVAAVVAGIYPILAK). The Cytoplasmic segment spans residues 129 to 135 (AVASLAR). Residues 136–156 (FRIDINILVVVTVGATIGMQD) traverse the membrane as a helical segment. Residue Tyr157 is a topological domain, extracellular. The chain crosses the membrane as a helical span at residues 158 to 178 (TEAAVVVFLFTIAEWLQSRAS). The Cytoplasmic portion of the chain corresponds to 179–304 (YKASAVMQSL…KTETQRFIDK (126 aa)). Residues 305–327 (CSKYYTPAIILISICFVAIPFAL) form a helical membrane-spanning segment. Residues 328 to 335 (KVHNLKHW) lie on the Extracellular side of the membrane. The chain crosses the membrane as a helical span at residues 336 to 353 (VHLALVVLVSACPCGLIL). At 354–647 (STPVATFCAL…KLAKRAKRKV (294 aa)) the chain is on the cytoplasmic side. The active-site 4-aspartylphosphate intermediate is the Asp391. Residues Asp592 and Asp596 each contribute to the Mg(2+) site. The helical transmembrane segment at 648 to 667 (VENVVISITMKGAILALAFA) threads the bilayer. Topologically, residues 668–671 (GHPL) are extracellular. The chain crosses the membrane as a helical span at residues 672 to 691 (IWAAVLADVGTCLLVILNSM). Residues 692–951 (LLLSDKHKTG…VGTLKEIVIE (260 aa)) lie on the Cytoplasmic side of the membrane. The segment covering 841–851 (ELQQSCHDKPS) has biased composition (basic and acidic residues). The tract at residues 841-866 (ELQQSCHDKPSGLDIGTGPKHEGSST) is disordered.

The protein belongs to the cation transport ATPase (P-type) (TC 3.A.3) family. Type IB subfamily. In terms of tissue distribution, predominantly expressed in the vascular tissues of roots, stems, and leaves. Also detected in developing anthers.

It is found in the cell membrane. It catalyses the reaction Zn(2+)(in) + ATP + H2O = Zn(2+)(out) + ADP + phosphate + H(+). The enzyme catalyses Cd(2+)(in) + ATP + H2O = Cd(2+)(out) + ADP + phosphate + H(+). Its function is as follows. Plays an important role in zinc transport and homeostasis. Could also be involved in cadmium detoxification. This Arabidopsis thaliana (Mouse-ear cress) protein is Cadmium/zinc-transporting ATPase HMA2 (HMA2).